A 573-amino-acid polypeptide reads, in one-letter code: Isocitrate dehydrogenase kinase/phosphatase (573 aa).

Residues 318-324 and Lys339 contribute to the ATP site; that span reads APGVRGM. Asp374 is a catalytic residue.

Belongs to the AceK family.

Its subcellular location is the cytoplasm. It catalyses the reaction L-seryl-[isocitrate dehydrogenase] + ATP = O-phospho-L-seryl-[isocitrate dehydrogenase] + ADP + H(+). Its function is as follows. Bifunctional enzyme which can phosphorylate or dephosphorylate isocitrate dehydrogenase (IDH) on a specific serine residue. This is a regulatory mechanism which enables bacteria to bypass the Krebs cycle via the glyoxylate shunt in response to the source of carbon. When bacteria are grown on glucose, IDH is fully active and unphosphorylated, but when grown on acetate or ethanol, the activity of IDH declines drastically concomitant with its phosphorylation. This chain is Isocitrate dehydrogenase kinase/phosphatase, found in Stutzerimonas stutzeri (strain A1501) (Pseudomonas stutzeri).